Here is a 166-residue protein sequence, read N- to C-terminus: Ribosome maturation factor RimM (166 aa).

Residues 90-163 (EGQYFIKDII…KIVIKAVEEW (74 aa)) form the PRC barrel domain.

The protein belongs to the RimM family. As to quaternary structure, binds ribosomal protein uS19.

The protein resides in the cytoplasm. Its function is as follows. An accessory protein needed during the final step in the assembly of 30S ribosomal subunit, possibly for assembly of the head region. Essential for efficient processing of 16S rRNA. May be needed both before and after RbfA during the maturation of 16S rRNA. It has affinity for free ribosomal 30S subunits but not for 70S ribosomes. The sequence is that of Ribosome maturation factor RimM from Clostridium acetobutylicum (strain ATCC 824 / DSM 792 / JCM 1419 / IAM 19013 / LMG 5710 / NBRC 13948 / NRRL B-527 / VKM B-1787 / 2291 / W).